A 288-amino-acid polypeptide reads, in one-letter code: Energy-coupling factor transporter ATP-binding protein EcfA2 (288 aa).

One can recognise an ABC transporter domain in the interval 3–245 (IKIENLTHVY…VDTLESVGLA (243 aa)). An ATP-binding site is contributed by 40 to 47 (GHTGSGKS).

This sequence belongs to the ABC transporter superfamily. Energy-coupling factor EcfA family. Forms a stable energy-coupling factor (ECF) transporter complex composed of 2 membrane-embedded substrate-binding proteins (S component), 2 ATP-binding proteins (A component) and 2 transmembrane proteins (T component).

The protein localises to the cell membrane. In terms of biological role, ATP-binding (A) component of a common energy-coupling factor (ECF) ABC-transporter complex. Unlike classic ABC transporters this ECF transporter provides the energy necessary to transport a number of different substrates. This is Energy-coupling factor transporter ATP-binding protein EcfA2 from Clostridium tetani (strain Massachusetts / E88).